We begin with the raw amino-acid sequence, 252 residues long: 3-dehydroquinate dehydratase (252 aa).

Residues S21, 46-48 (EWR), and R82 contribute to the 3-dehydroquinate site. The Proton donor/acceptor role is filled by H143. Residue K170 is the Schiff-base intermediate with substrate of the active site. Residues R213, S232, and Q236 each contribute to the 3-dehydroquinate site.

This sequence belongs to the type-I 3-dehydroquinase family. As to quaternary structure, homodimer.

It carries out the reaction 3-dehydroquinate = 3-dehydroshikimate + H2O. It participates in metabolic intermediate biosynthesis; chorismate biosynthesis; chorismate from D-erythrose 4-phosphate and phosphoenolpyruvate: step 3/7. In terms of biological role, involved in the third step of the chorismate pathway, which leads to the biosynthesis of aromatic amino acids. Catalyzes the cis-dehydration of 3-dehydroquinate (DHQ) and introduces the first double bond of the aromatic ring to yield 3-dehydroshikimate. The chain is 3-dehydroquinate dehydratase from Shigella flexneri serotype 5b (strain 8401).